The sequence spans 382 residues: Galactokinase (382 aa).

34–37 (EHTD) provides a ligand contact to substrate. Residue 124 to 130 (GAGLSSS) participates in ATP binding. Mg(2+) contacts are provided by Ser130 and Glu162. Asp174 functions as the Proton acceptor in the catalytic mechanism. Tyr223 contributes to the substrate binding site.

It belongs to the GHMP kinase family. GalK subfamily.

It is found in the cytoplasm. It catalyses the reaction alpha-D-galactose + ATP = alpha-D-galactose 1-phosphate + ADP + H(+). It participates in carbohydrate metabolism; galactose metabolism. Functionally, catalyzes the transfer of the gamma-phosphate of ATP to D-galactose to form alpha-D-galactose-1-phosphate (Gal-1-P). The sequence is that of Galactokinase from Salmonella agona (strain SL483).